The sequence spans 4646 residues: Cytoplasmic dynein 1 heavy chain 1 (4646 aa).

S2 carries the post-translational modification N-acetylserine. The segment at 53–1867 is stem; the sequence is EAALEEKSAL…SIQMANAKFN (1815 aa). Position 70 is a phosphoserine (S70). Coiled coils occupy residues 181–202, 455–478, and 543–566; these read SVEK…NIEI, AHRK…QLRA, and TEAW…RITA. Residues 448–703 form an interaction with DYNC1I2 region; the sequence is MVWRINPAHR…NTQEIFDDWA (256 aa). The interaction with DYNC1LI2 stretch occupies residues 651-802; the sequence is AKQIDRQLTA…EKVEERNTIS (152 aa). K1125 is modified (N6-acetyllysine). 2 coiled-coil regions span residues 1171 to 1252 and 1357 to 1373; these read TYVQ…AVES and RKLR…LKSF. S1230 is modified (phosphoserine). 4 AAA regions span residues 1868–2099, 2180–2452, 2556–2805, and 2899–3168; these read YGFE…VLVS, EELK…LTRL, EVET…WVRG, and VFYE…GGRT. Residues 1906-1913 and 2224-2231 contribute to the ATP site; these read GPAGTGKT and GPSGSGKS. The tract at residues 2390-2411 is disordered; it reads GEDEAQRRRKGKEDEGEEAASP. Residues 2595–2602 and 2937–2944 each bind ATP; these read GPPGSGKT and GVSGAGKT. 3 coiled-coil regions span residues 3189 to 3275, 3396 to 3500, and 3737 to 3800; these read EKRS…ADKQ, AIAQ…KNQM, and EFQL…VSQQ. Residues 3189–3500 form a stalk region; it reads EKRSELEEQQ…KTSETFKNQM (312 aa). The residue at position 3480 (K3480) is an N6-acetyllysine. AAA stretches follow at residues 3553–3782 and 4005–4221; these read LSNA…EVTR and AHMF…TVDT. S4162 is modified (phosphoserine). The residue at position 4283 (K4283) is an N6-acetyllysine. T4366 is subject to Phosphothreonine. At S4368 the chain carries Phosphoserine.

The protein belongs to the dynein heavy chain family. In terms of assembly, homodimer. The cytoplasmic dynein 1 complex consists of two catalytic heavy chains (HCs) and a number of non-catalytic subunits presented by intermediate chains (ICs), light intermediate chains (LICs) and light chains (LCs); the composition seems to vary in respect to the IC, LIC and LC composition. The heavy chain homodimer serves as a scaffold for the probable homodimeric assembly of the respective non-catalytic subunits. The ICs and LICs bind directly to the HC dimer and dynein LCs assemble on the IC dimer. Interacts with DYNC1LI1; DYNC1LI1 and DYNC1LI2 bind mutually exclusive to DYNC1H1. Interacts with DYNC1LI2; DYNC1LI1 and DYNC1LI2 bind mutually exclusive to DYNC1H1. Interacts with DYNC1I2. Interacts with BICD2. Interacts with isoform 2 of CRACR2A. Interacts with DNALI1.

The protein localises to the cytoplasm. The protein resides in the cytoskeleton. In terms of biological role, cytoplasmic dynein 1 acts as a motor for the intracellular retrograde motility of vesicles and organelles along microtubules. Dynein has ATPase activity; the force-producing power stroke is thought to occur on release of ADP. Plays a role in mitotic spindle assembly and metaphase plate congression. The protein is Cytoplasmic dynein 1 heavy chain 1 of Homo sapiens (Human).